Here is a 320-residue protein sequence, read N- to C-terminus: ATP-dependent 6-phosphofructokinase (320 aa).

Glycine 12 provides a ligand contact to ATP. 22 to 26 (RGVVR) lines the ADP pocket. ATP-binding positions include 73-74 (RF) and 103-106 (GDGS). Mg(2+) is bound at residue aspartate 104. 126 to 128 (TID) provides a ligand contact to substrate. Aspartate 128 serves as the catalytic Proton acceptor. Arginine 155 is an ADP binding site. Substrate is bound by residues arginine 163 and 170-172 (MGR). ADP is bound by residues 186 to 188 (GCE), lysine 212, and 214 to 216 (KKH). Substrate is bound by residues glutamate 223, arginine 244, and 250 to 253 (HIQR).

Belongs to the phosphofructokinase type A (PFKA) family. ATP-dependent PFK group I subfamily. Prokaryotic clade 'B1' sub-subfamily. Homotetramer. The cofactor is Mg(2+).

The protein localises to the cytoplasm. The catalysed reaction is beta-D-fructose 6-phosphate + ATP = beta-D-fructose 1,6-bisphosphate + ADP + H(+). It functions in the pathway carbohydrate degradation; glycolysis; D-glyceraldehyde 3-phosphate and glycerone phosphate from D-glucose: step 3/4. Allosterically activated by ADP and other diphosphonucleosides, and allosterically inhibited by phosphoenolpyruvate. Its function is as follows. Catalyzes the phosphorylation of D-fructose 6-phosphate to fructose 1,6-bisphosphate by ATP, the first committing step of glycolysis. This is ATP-dependent 6-phosphofructokinase from Vibrio vulnificus (strain CMCP6).